A 377-amino-acid chain; its full sequence is Succinyl-diaminopimelate desuccinylase (377 aa).

His66 lines the Zn(2+) pocket. Asp68 is an active-site residue. Asp99 serves as a coordination point for Zn(2+). Glu133 serves as the catalytic Proton acceptor. Zn(2+) contacts are provided by Glu134, Glu162, and His348.

This sequence belongs to the peptidase M20A family. DapE subfamily. In terms of assembly, homodimer. The cofactor is Zn(2+). Requires Co(2+) as cofactor.

It catalyses the reaction N-succinyl-(2S,6S)-2,6-diaminopimelate + H2O = (2S,6S)-2,6-diaminopimelate + succinate. It participates in amino-acid biosynthesis; L-lysine biosynthesis via DAP pathway; LL-2,6-diaminopimelate from (S)-tetrahydrodipicolinate (succinylase route): step 3/3. Its function is as follows. Catalyzes the hydrolysis of N-succinyl-L,L-diaminopimelic acid (SDAP), forming succinate and LL-2,6-diaminopimelate (DAP), an intermediate involved in the bacterial biosynthesis of lysine and meso-diaminopimelic acid, an essential component of bacterial cell walls. This is Succinyl-diaminopimelate desuccinylase from Methylococcus capsulatus (strain ATCC 33009 / NCIMB 11132 / Bath).